Consider the following 156-residue polypeptide: Small ribosomal subunit protein uS7 (156 aa).

It belongs to the universal ribosomal protein uS7 family. As to quaternary structure, part of the 30S ribosomal subunit. Contacts proteins S9 and S11.

Its function is as follows. One of the primary rRNA binding proteins, it binds directly to 16S rRNA where it nucleates assembly of the head domain of the 30S subunit. Is located at the subunit interface close to the decoding center, probably blocks exit of the E-site tRNA. This chain is Small ribosomal subunit protein uS7, found in Vibrio vulnificus (strain CMCP6).